A 592-amino-acid polypeptide reads, in one-letter code: Protein alan shepard (592 aa).

Residues 1–68 are disordered; sequence MGGPHHQHQQ…ASVAAAPPTP (68 aa). Positions 18-28 are enriched in gly residues; that stretch reads VGGGNGHGGGA. Residues 36 to 54 show a composition bias toward polar residues; sequence PNSQQLPPQMPRSQNYANG. Over residues 55 to 64 the composition is skewed to low complexity; sequence SSSAASVAAA. Phosphotyrosine is present on residues Tyr124 and Tyr140. The disordered stretch occupies residues 162–224; that stretch reads PATTTYGQRV…AQNQNQQGGE (63 aa). The segment covering 176 to 224 has biased composition (low complexity); the sequence is SPSNTNSSSSSNTGSQSGTLSTSLSNTTNTNTTMGPNGTAQNQNQQGGE. 2 consecutive RRM domains span residues 229-307 and 319-398; these read TNLY…IWVL and TNLY…FADG. Residues 565–592 form a disordered region; sequence PMTDSEQASTAASPDEAYTQYPHQAAPK.

Functionally, has a role in the perception of gravity. The sequence is that of Protein alan shepard from Drosophila mojavensis (Fruit fly).